The following is a 235-amino-acid chain: Acyl-protein thioesterase 1 (235 aa).

Active-site charge relay system residues include Ser-125, Asp-181, and His-213.

Belongs to the AB hydrolase superfamily. AB hydrolase 2 family.

The protein localises to the cytoplasm. The protein resides in the nucleus. It catalyses the reaction S-hexadecanoyl-L-cysteinyl-[protein] + H2O = L-cysteinyl-[protein] + hexadecanoate + H(+). Hydrolyzes fatty acids from S-acylated cysteine residues in proteins with a strong preference for palmitoylated G-alpha proteins over other acyl substrates. Mediates the deacylation of G-alpha proteins such as GPA1 in vivo, but has weak or no activity toward palmitoylated Ras proteins. Has weak lysophospholipase activity in vitro; however such activity may not exist in vivo. This Gibberella zeae (strain ATCC MYA-4620 / CBS 123657 / FGSC 9075 / NRRL 31084 / PH-1) (Wheat head blight fungus) protein is Acyl-protein thioesterase 1.